Consider the following 32-residue polypeptide: Corticostatin-related peptide RK-1 (32 aa).

Disulfide bonds link Cys-3-Cys-29, Cys-5-Cys-19, and Cys-9-Cys-28.

It is found in the secreted. Has antimicrobial activity against E.coli and activates ion channel activity. This Oryctolagus cuniculus (Rabbit) protein is Corticostatin-related peptide RK-1.